The sequence spans 265 residues: Protein synthesis inhibitor PD-S2 (265 aa).

2 disulfides stabilise this stretch: cysteine 34–cysteine 262 and cysteine 88–cysteine 110. Asparagine 120 carries N-linked (GlcNAc...) asparagine glycosylation.

Belongs to the ribosome-inactivating protein family. Type 1 RIP subfamily. Glycosylated. As to expression, seeds.

It carries out the reaction Endohydrolysis of the N-glycosidic bond at one specific adenosine on the 28S rRNA.. Functionally, inhibits protein synthesis in animal cells. Useful as immunotoxin for pharmacological applications. This chain is Protein synthesis inhibitor PD-S2, found in Phytolacca dioica (Bella sombra tree).